Reading from the N-terminus, the 166-residue chain is Regulator of ribonuclease activity A (166 aa).

It belongs to the RraA family. In terms of assembly, homotrimer. Binds to both RNA-binding sites in the C-terminal region of Rne and to RhlB.

The protein resides in the cytoplasm. Globally modulates RNA abundance by binding to RNase E (Rne) and regulating its endonucleolytic activity. Can modulate Rne action in a substrate-dependent manner by altering the composition of the degradosome. Modulates RNA-binding and helicase activities of the degradosome. The sequence is that of Regulator of ribonuclease activity A from Actinobacillus succinogenes (strain ATCC 55618 / DSM 22257 / CCUG 43843 / 130Z).